Reading from the N-terminus, the 648-residue chain is Macrolide export ATP-binding/permease protein MacB (648 aa).

Residues 5–243 (LELKDIRRSY…TGGTEPVVNT (239 aa)) enclose the ABC transporter domain. 41 to 48 (GASGSGKS) lines the ATP pocket. 4 helical membrane-spanning segments follow: residues 273–293 (LLTM…VVVG), 523–543 (LFLT…VMNI), 576–596 (AVLV…LIAF), and 611–631 (PLAL…FGWL).

The protein belongs to the ABC transporter superfamily. Macrolide exporter (TC 3.A.1.122) family. As to quaternary structure, homodimer. Part of the tripartite efflux system MacAB-TolC, which is composed of an inner membrane transporter, MacB, a periplasmic membrane fusion protein, MacA, and an outer membrane component, TolC. The complex forms a large protein conduit and can translocate molecules across both the inner and outer membranes. Interacts with MacA.

The protein localises to the cell inner membrane. In terms of biological role, part of the tripartite efflux system MacAB-TolC. MacB is a non-canonical ABC transporter that contains transmembrane domains (TMD), which form a pore in the inner membrane, and an ATP-binding domain (NBD), which is responsible for energy generation. Confers resistance against macrolides. This Escherichia coli (strain UTI89 / UPEC) protein is Macrolide export ATP-binding/permease protein MacB.